We begin with the raw amino-acid sequence, 226 residues long: 7-cyano-7-deazaguanine synthase (226 aa).

9 to 19 provides a ligand contact to ATP; that stretch reads LSGGLDSTVAT. Zn(2+) contacts are provided by Cys-192, Cys-200, Cys-203, and Cys-206.

It belongs to the QueC family. Requires Zn(2+) as cofactor.

It catalyses the reaction 7-carboxy-7-deazaguanine + NH4(+) + ATP = 7-cyano-7-deazaguanine + ADP + phosphate + H2O + H(+). The protein operates within purine metabolism; 7-cyano-7-deazaguanine biosynthesis. Its function is as follows. Catalyzes the ATP-dependent conversion of 7-carboxy-7-deazaguanine (CDG) to 7-cyano-7-deazaguanine (preQ(0)). In Methanosphaera stadtmanae (strain ATCC 43021 / DSM 3091 / JCM 11832 / MCB-3), this protein is 7-cyano-7-deazaguanine synthase.